The sequence spans 302 residues: Glutaminase (302 aa).

S61, N111, E155, N162, Y186, Y238, and V256 together coordinate substrate.

It belongs to the glutaminase family. In terms of assembly, homotetramer.

It carries out the reaction L-glutamine + H2O = L-glutamate + NH4(+). The polypeptide is Glutaminase (Pseudomonas fluorescens (strain Pf0-1)).